Here is a 186-residue protein sequence, read N- to C-terminus: uncharacterized protein (186 aa).

Disordered regions lie at residues 17 to 47 (LSGESEEDLAEERENPALVGSETAEPTEETF), 77 to 105 (EDKLLPSEPCADHPLAARPPSQAAAAAEA), and 121 to 164 (QQAA…PVAG). Low complexity predominate over residues 90–105 (PLAARPPSQAAAAAEA). Positions 136-149 (PEPDPEPADEAAEE) are enriched in acidic residues.

This is an uncharacterized protein from Homo sapiens (Human).